The sequence spans 270 residues: tRNA pseudouridine synthase A (270 aa).

D60 serves as the catalytic Nucleophile. The interval 107–111 (FHARF) is RNA binding. Y118 contributes to the substrate binding site. The tract at residues 168–172 (QCQSR) is interaction with tRNA.

This sequence belongs to the tRNA pseudouridine synthase TruA family. As to quaternary structure, homodimer.

It carries out the reaction uridine(38/39/40) in tRNA = pseudouridine(38/39/40) in tRNA. Formation of pseudouridine at positions 38, 39 and 40 in the anticodon stem and loop of transfer RNAs. This Escherichia coli O9:H4 (strain HS) protein is tRNA pseudouridine synthase A.